We begin with the raw amino-acid sequence, 628 residues long: Phosphomethylpyrimidine synthase (628 aa).

Substrate is bound by residues asparagine 225, methionine 254, tyrosine 283, histidine 319, 339-341 (SRG), 380-383 (DGLR), and glutamate 419. Residue histidine 423 coordinates Zn(2+). Tyrosine 446 contributes to the substrate binding site. Histidine 487 is a Zn(2+) binding site. [4Fe-4S] cluster contacts are provided by cysteine 567, cysteine 570, and cysteine 575.

The protein belongs to the ThiC family. Homodimer. [4Fe-4S] cluster serves as cofactor.

It carries out the reaction 5-amino-1-(5-phospho-beta-D-ribosyl)imidazole + S-adenosyl-L-methionine = 4-amino-2-methyl-5-(phosphooxymethyl)pyrimidine + CO + 5'-deoxyadenosine + formate + L-methionine + 3 H(+). The protein operates within cofactor biosynthesis; thiamine diphosphate biosynthesis. In terms of biological role, catalyzes the synthesis of the hydroxymethylpyrimidine phosphate (HMP-P) moiety of thiamine from aminoimidazole ribotide (AIR) in a radical S-adenosyl-L-methionine (SAM)-dependent reaction. The protein is Phosphomethylpyrimidine synthase of Leptothrix cholodnii (strain ATCC 51168 / LMG 8142 / SP-6) (Leptothrix discophora (strain SP-6)).